The primary structure comprises 877 residues: Phosphoenolpyruvate carboxylase (877 aa).

Active-site residues include H138 and K543.

Belongs to the PEPCase type 1 family. It depends on Mg(2+) as a cofactor.

It catalyses the reaction oxaloacetate + phosphate = phosphoenolpyruvate + hydrogencarbonate. Forms oxaloacetate, a four-carbon dicarboxylic acid source for the tricarboxylic acid cycle. This Aeromonas hydrophila subsp. hydrophila (strain ATCC 7966 / DSM 30187 / BCRC 13018 / CCUG 14551 / JCM 1027 / KCTC 2358 / NCIMB 9240 / NCTC 8049) protein is Phosphoenolpyruvate carboxylase.